Consider the following 342-residue polypeptide: Outer membrane porin C (342 aa).

Belongs to the Gram-negative porin family. Homotrimer.

The protein localises to the cell outer membrane. In terms of biological role, forms pores that allow passive diffusion of small molecules across the outer membrane. In R.aquatilis OmpC is involved in the adhesion to wheat roots. The chain is Outer membrane porin C (ompC) from Rahnella aquatilis.